We begin with the raw amino-acid sequence, 419 residues long: MKIFVKTLKGTHFEIEVKPEDSVVDVKKNIESVQGADVYPAAKQMLIHQGKVLKDETTIEENKVAENSFIVIMMNKSKPASAAASSASAGTSQAKSIPPSTSQPSISPQTPASVSAPVAPAPTRPPPPAPTPTPAPVAATETVTTPIPEPVPATISSSTPAPDSAPVGSQGDVYGQAASNLAAGSNLESTIQQILDMGGGTWDRETVVLALRAAFNNPERAVEYLYTGIPEQAEVPPVARPPASAGQPANPPAQTQQPAAAPASGPNANPLDLFPQGLPNVGGNPGAGTLDFLRNSQQFQALRAMVQANPQVLQPMLQELGKQNPNLMRLIQDHQADFLRLINEPVEGGGESGNLLGQMAAGMPQPQAIQVTHEEREAIERLEAMGFERALVLEVFFACNKNEELAANYLLDHMHEFEE.

Residues 1-79 enclose the Ubiquitin-like domain; the sequence is MKIFVKTLKG…IVIMMNKSKP (79 aa). The segment covering 83-118 has biased composition (low complexity); the sequence is AASSASAGTSQAKSIPPSTSQPSISPQTPASVSAPV. Residues 83-172 form a disordered region; that stretch reads AASSASAGTS…DSAPVGSQGD (90 aa). Residues 119-135 are compositionally biased toward pro residues; sequence APAPTRPPPPAPTPTPA. A compositionally biased stretch (low complexity) spans 136–146; it reads PVAATETVTTP. In terms of domain architecture, UBA 1 spans 185–228; that stretch reads SNLESTIQQILDMGGGTWDRETVVLALRAAFNNPERAVEYLYTG. The disordered stretch occupies residues 235–282; the sequence is VPPVARPPASAGQPANPPAQTQQPAAAPASGPNANPLDLFPQGLPNVG. Residues 245-270 show a composition bias toward low complexity; it reads AGQPANPPAQTQQPAAAPASGPNANP. An STI1 domain is found at 288–331; sequence GTLDFLRNSQQFQALRAMVQANPQVLQPMLQELGKQNPNLMRLI. The region spanning 372–413 is the UBA 2 domain; sequence THEEREAIERLEAMGFERALVLEVFFACNKNEELAANYLLDH.

The protein belongs to the RAD23 family. Interacts with 'Lys-48'-linked polyubiquitin chains via its both UBA domains. Interacts with RPN10 via its ubiquitin-like domain. In terms of tissue distribution, widely expressed in the whole plant.

It localises to the nucleus. Its subcellular location is the cytoplasm. Functionally, may be involved in nucleotide excision repair. Binds and presumably selects ubiquitin-conjugates for destruction. Prefers multiubiquitin chains rather than single ubiquitins, with a binding affinity for 'Lys-48'-linked ubiquitin chains. Acts as a ubiquitin receptor that associates with the 26S proteasomal docking subunit RPN10 for the indirect recognition of ubiquitinated substrates of ubiquitin/26S proteasome-mediated proteolysis (UPP). Involved in UV tolerance in hypocotyls, specifically in dark conditions. This is Ubiquitin receptor RAD23c from Arabidopsis thaliana (Mouse-ear cress).